Consider the following 134-residue polypeptide: Syncollin (134 aa).

Residues 1–21 (MSPLCLLLLALALVAVPGARG) form the signal peptide.

Monomer and homooligomer; most probably hexameric. Interacts with GP2. According to PubMed:10753942 interaction with syntaxins shown in PubMed:9244306 is physiologically questionable. In terms of processing, contains intrachain disulfide bonds. As to expression, specifically expressed in pancreas and also detected in secretory granules of parotid gland (at protein level). Expressed in pancreas, spleen, small intestine, lung and neutrophilic granulocytes (at protein level). Expressed by epithelial cells in duodenum and colon.

The protein localises to the zymogen granule membrane. The protein resides in the zymogen granule lumen. Functions in exocytosis in pancreatic acinar cells regulating the fusion of zymogen granules with each other. May have a pore-forming activity on membranes and regulate exocytosis in other exocrine tissues. This chain is Syncollin (Sycn), found in Rattus norvegicus (Rat).